A 227-amino-acid chain; its full sequence is ATP-dependent dethiobiotin synthetase BioD (227 aa).

13–18 (DVGKTV) provides a ligand contact to ATP. Thr-17 is a Mg(2+) binding site. The active site involves Lys-38. Residues Asp-55, 116–119 (EGAG), 176–177 (NR), and 205–207 (PYI) contribute to the ATP site. Residues Asp-55 and Glu-116 each coordinate Mg(2+).

It belongs to the dethiobiotin synthetase family. As to quaternary structure, homodimer. Requires Mg(2+) as cofactor.

The protein resides in the cytoplasm. It catalyses the reaction (7R,8S)-7,8-diammoniononanoate + CO2 + ATP = (4R,5S)-dethiobiotin + ADP + phosphate + 3 H(+). The protein operates within cofactor biosynthesis; biotin biosynthesis; biotin from 7,8-diaminononanoate: step 1/2. Catalyzes a mechanistically unusual reaction, the ATP-dependent insertion of CO2 between the N7 and N8 nitrogen atoms of 7,8-diaminopelargonic acid (DAPA, also called 7,8-diammoniononanoate) to form a ureido ring. The sequence is that of ATP-dependent dethiobiotin synthetase BioD from Vibrio vulnificus (strain CMCP6).